A 134-amino-acid polypeptide reads, in one-letter code: uncharacterized protein (134 aa).

The next 3 helical transmembrane spans lie at 5-25 (FGIFSFLAVSVSAAGFFFGGF), 30-50 (LILLSLMAIEFISTTLKETII), and 62-82 (LVKKLVTLALISVCHFFDQLL).

It belongs to the bacteriophage holin family. Cp-1 holin subfamily.

The protein localises to the cell membrane. This is an uncharacterized protein from Bacillus subtilis (strain 168).